Here is a 246-residue protein sequence, read N- to C-terminus: 1-(5-phosphoribosyl)-5-[(5-phosphoribosylamino)methylideneamino] imidazole-4-carboxamide isomerase (246 aa).

Asp-8 (proton acceptor) is an active-site residue. The active-site Proton donor is Asp-131.

This sequence belongs to the HisA/HisF family.

Its subcellular location is the cytoplasm. The catalysed reaction is 1-(5-phospho-beta-D-ribosyl)-5-[(5-phospho-beta-D-ribosylamino)methylideneamino]imidazole-4-carboxamide = 5-[(5-phospho-1-deoxy-D-ribulos-1-ylimino)methylamino]-1-(5-phospho-beta-D-ribosyl)imidazole-4-carboxamide. Its pathway is amino-acid biosynthesis; L-histidine biosynthesis; L-histidine from 5-phospho-alpha-D-ribose 1-diphosphate: step 4/9. The sequence is that of 1-(5-phosphoribosyl)-5-[(5-phosphoribosylamino)methylideneamino] imidazole-4-carboxamide isomerase from Chromobacterium violaceum (strain ATCC 12472 / DSM 30191 / JCM 1249 / CCUG 213 / NBRC 12614 / NCIMB 9131 / NCTC 9757 / MK).